The following is an 86-amino-acid chain: Small ribosomal subunit protein bS20 (86 aa).

A disordered region spans residues 1–27; that stretch reads MANNKSAKKRAIQAEKRRQHNASRRSM.

Belongs to the bacterial ribosomal protein bS20 family.

Binds directly to 16S ribosomal RNA. The sequence is that of Small ribosomal subunit protein bS20 from Vibrio vulnificus (strain CMCP6).